Here is a 302-residue protein sequence, read N- to C-terminus: MLILGVGYFLLGLILLYYGSDWFVLGSERIARHFNVSNFVIGATVMAIGTSLPEILTSAYASYMHAPGISIGNAIGSCICNIGLVLGLSAIISPIIVDKNLQKNILVYLLFVIFAAVIGIDGFSWIDGVVLLILFIIYLRWTVKNGSAEIEENNDKNNPSVVFSLVLLIIGLIGVLVGAELFVDGAKKIALALDISDKVIGFTLVAFGTSLPELMVSLAAAKRNLGGMVLGNVIGSNIADIGGALAVGSLFMHLPAENVQMAVLVIMSLLLYLFAKYSKIGRWQGILFLALYIIAIASLRMG.

9 helical membrane-spanning segments follow: residues 3 to 23 (ILGVGYFLLGLILLYYGSDWF), 39 to 59 (FVIGATVMAIGTSLPEILTSA), 77 to 97 (SCICNIGLVLGLSAIISPIIV), 106 to 126 (LVYLLFVIFAAVIGIDGFSWI), 128 to 148 (GVVLLILFIIYLRWTVKNGSA), 163 to 183 (FSLVLLIIGLIGVLVGAELFV), 199 to 219 (VIGFTLVAFGTSLPELMVSLA), 227 to 247 (GMVLGNVIGSNIADIGGALAV), and 254 to 274 (LPAENVQMAVLVIMSLLLYLF).

It belongs to the Ca(2+):cation antiporter (CaCA) (TC 2.A.19) family.

The protein resides in the cell membrane. This is an uncharacterized protein from Methanocaldococcus jannaschii (strain ATCC 43067 / DSM 2661 / JAL-1 / JCM 10045 / NBRC 100440) (Methanococcus jannaschii).